We begin with the raw amino-acid sequence, 433 residues long: D-amino acid dehydrogenase (433 aa).

Position 3-17 (3-17) interacts with FAD; it reads VVILGSGVVGVASAW.

Belongs to the DadA oxidoreductase family. It depends on FAD as a cofactor.

It catalyses the reaction a D-alpha-amino acid + A + H2O = a 2-oxocarboxylate + AH2 + NH4(+). The protein operates within amino-acid degradation; D-alanine degradation; NH(3) and pyruvate from D-alanine: step 1/1. In terms of biological role, oxidative deamination of D-amino acids. This is D-amino acid dehydrogenase from Erwinia tasmaniensis (strain DSM 17950 / CFBP 7177 / CIP 109463 / NCPPB 4357 / Et1/99).